A 337-amino-acid chain; its full sequence is Membrane-spanning 4-domains subfamily A member 18 (337 aa).

The interval 101–121 (LGTTDLQTQPGGPQNPPTCAP) is disordered. The next 4 membrane-spanning stretches (helical) occupy residues 155–175 (LGAI…NPSL), 183–203 (AISG…SLSV), 220–240 (MNVV…VDLI), and 252–272 (GGLL…SHFG).

The protein belongs to the MS4A family.

It is found in the membrane. In Bos taurus (Bovine), this protein is Membrane-spanning 4-domains subfamily A member 18 (MS4A18).